Consider the following 617-residue polypeptide: Serine/threonine-protein phosphatase 2A activator 1 (617 aa).

The span at 1–11 shows a compositional bias: pro residues; it reads MDPTSKRPPPA. 5 disordered regions span residues 1–25, 84–169, 230–261, 376–398, and 572–617; these read MDPT…PKLE, VSTS…ESES, GAGG…TNEQ, SSPN…SDIT, and RFTP…PWTK. Positions 84-93 are enriched in polar residues; the sequence is VSTSEPTTDG. Positions 94-104 are enriched in low complexity; sequence QQQQQQQQQRQ. A compositionally biased stretch (acidic residues) spans 239-252; it reads EEGTETETETETEG.

It belongs to the PTPA-type PPIase family.

Its subcellular location is the cytoplasm. The protein localises to the nucleus. The catalysed reaction is [protein]-peptidylproline (omega=180) = [protein]-peptidylproline (omega=0). PPIases accelerate the folding of proteins. It catalyzes the cis-trans isomerization of proline imidic peptide bonds in oligopeptides. Acts as a regulatory subunit for PP2A-like phosphatases modulating their activity or substrate specificity, probably by inducing a conformational change in the catalytic subunit, a direct target of the PPIase. Can reactivate inactive phosphatase PP2A-phosphatase methylesterase complexes (PP2Ai) in presence of ATP and Mg(2+) by dissociating the inactive form from the complex. The sequence is that of Serine/threonine-protein phosphatase 2A activator 1 (rrd-1) from Neurospora crassa (strain ATCC 24698 / 74-OR23-1A / CBS 708.71 / DSM 1257 / FGSC 987).